Here is a 368-residue protein sequence, read N- to C-terminus: tRNA/tmRNA (uracil-C(5))-methyltransferase (368 aa).

Gln-192, Tyr-220, Asn-225, Glu-241, and Asp-301 together coordinate S-adenosyl-L-methionine. The active-site Nucleophile is Cys-326. Catalysis depends on Glu-360, which acts as the Proton acceptor.

Belongs to the class I-like SAM-binding methyltransferase superfamily. RNA M5U methyltransferase family. TrmA subfamily.

The enzyme catalyses uridine(54) in tRNA + S-adenosyl-L-methionine = 5-methyluridine(54) in tRNA + S-adenosyl-L-homocysteine + H(+). The catalysed reaction is uridine(341) in tmRNA + S-adenosyl-L-methionine = 5-methyluridine(341) in tmRNA + S-adenosyl-L-homocysteine + H(+). Dual-specificity methyltransferase that catalyzes the formation of 5-methyluridine at position 54 (m5U54) in all tRNAs, and that of position 341 (m5U341) in tmRNA (transfer-mRNA). The polypeptide is tRNA/tmRNA (uracil-C(5))-methyltransferase (Actinobacillus pleuropneumoniae serotype 5b (strain L20)).